We begin with the raw amino-acid sequence, 289 residues long: Nucleotide-binding protein Francci3_1634 (289 aa).

13 to 20 (GLSGAGRS) is an ATP binding site. Residue 64-67 (DVRG) participates in GTP binding.

It belongs to the RapZ-like family.

In terms of biological role, displays ATPase and GTPase activities. The sequence is that of Nucleotide-binding protein Francci3_1634 from Frankia casuarinae (strain DSM 45818 / CECT 9043 / HFP020203 / CcI3).